Consider the following 511-residue polypeptide: Glucans biosynthesis protein G (511 aa).

Positions 1 to 22 (MMKMRWLSAAVMLTLYTSSSWA) are cleaved as a signal peptide.

Belongs to the OpgD/OpgG family.

It is found in the periplasm. It functions in the pathway glycan metabolism; osmoregulated periplasmic glucan (OPG) biosynthesis. Its function is as follows. Involved in the biosynthesis of osmoregulated periplasmic glucans (OPGs). The polypeptide is Glucans biosynthesis protein G (Escherichia fergusonii (strain ATCC 35469 / DSM 13698 / CCUG 18766 / IAM 14443 / JCM 21226 / LMG 7866 / NBRC 102419 / NCTC 12128 / CDC 0568-73)).